The primary structure comprises 224 residues: Ribonuclease HII (224 aa).

The 185-residue stretch at 17-201 (GTVIGVDEAG…VLSNLSVKKV (185 aa)) folds into the RNase H type-2 domain. The a divalent metal cation site is built by aspartate 23, glutamate 24, and aspartate 111.

Belongs to the RNase HII family. Requires Mn(2+) as cofactor. The cofactor is Mg(2+).

The protein localises to the cytoplasm. The catalysed reaction is Endonucleolytic cleavage to 5'-phosphomonoester.. Endonuclease that specifically degrades the RNA of RNA-DNA hybrids. This Pseudothermotoga lettingae (strain ATCC BAA-301 / DSM 14385 / NBRC 107922 / TMO) (Thermotoga lettingae) protein is Ribonuclease HII.